The primary structure comprises 71 residues: Protein PSY2 (71 aa).

A signal peptide spans 1–20 (MSFGTRLLLFLILTLPLVTS). The propeptide occupies 21 to 46 (SSPNTLHVSGIVKTGTTSRFLMMTIE). At Tyr-48 the chain carries Sulfotyrosine. Residues 50-71 (DPSANTRHDPSVPTNAKADTTP) form a disordered region. A compositionally biased stretch (polar residues) spans 61 to 71 (VPTNAKADTTP). 4-hydroxyproline is present on Pro-62. Pro-62 carries an O-linked (Ara...) hydroxyproline glycan. Residues 65 to 71 (AKADTTP) constitute a propeptide that is removed on maturation.

This sequence belongs to the sulfated-peptide plant hormone family. The sulfation and the glycosylation are required for full activity.

It is found in the secreted. In terms of biological role, promotes cellular proliferation and expansion. This is Protein PSY2 (PSY2) from Arabidopsis thaliana (Mouse-ear cress).